We begin with the raw amino-acid sequence, 184 residues long: UPF0398 protein BCAH820_1652 (184 aa).

This sequence belongs to the UPF0398 family.

This is UPF0398 protein BCAH820_1652 from Bacillus cereus (strain AH820).